The primary structure comprises 123 residues: Double-stranded DNA deaminase immunity protein (123 aa).

In terms of assembly, the toxic domain forms a 1:1 complex with the DddI immunity protein. This protein blocks the active site of the toxin.

In terms of biological role, immunity protein component of a toxin-immunity protein module, which functions as a cellular contact-dependent growth inhibition (CDI) system. CDI modules allow bacteria to communicate with and inhibit the growth of closely related neighboring bacteria in a contact-dependent fashion. Bacteria that have this module inhibit or kill bacteria without it, giving them a growth advantage. Specifically inhibits the toxic activity of cognate toxin DddA (C-terminal 163 residue fragment) upon expression in E.coli. This Burkholderia cenocepacia (strain H111) protein is Double-stranded DNA deaminase immunity protein.